The sequence spans 255 residues: tRNA (guanine-N(1)-)-methyltransferase (255 aa).

S-adenosyl-L-methionine contacts are provided by residues Gly117 and 137–142 (IGDYVL).

It belongs to the RNA methyltransferase TrmD family. Homodimer.

It is found in the cytoplasm. The enzyme catalyses guanosine(37) in tRNA + S-adenosyl-L-methionine = N(1)-methylguanosine(37) in tRNA + S-adenosyl-L-homocysteine + H(+). In terms of biological role, specifically methylates guanosine-37 in various tRNAs. The sequence is that of tRNA (guanine-N(1)-)-methyltransferase from Glaesserella parasuis serovar 5 (strain SH0165) (Haemophilus parasuis).